Reading from the N-terminus, the 491-residue chain is Cytochrome P450 2B3 (491 aa).

C436 contacts heme.

The protein belongs to the cytochrome P450 family. Heme is required as a cofactor. In terms of tissue distribution, liver. Not found in the lung, kidney and prostate.

Its subcellular location is the endoplasmic reticulum membrane. The protein resides in the microsome membrane. The enzyme catalyses an organic molecule + reduced [NADPH--hemoprotein reductase] + O2 = an alcohol + oxidized [NADPH--hemoprotein reductase] + H2O + H(+). Cytochromes P450 are a group of heme-thiolate monooxygenases. In liver microsomes, this enzyme is involved in an NADPH-dependent electron transport pathway. It oxidizes a variety of structurally unrelated compounds, including steroids, fatty acids, and xenobiotics. The chain is Cytochrome P450 2B3 (Cyp2b3) from Rattus norvegicus (Rat).